A 158-amino-acid polypeptide reads, in one-letter code: NAD(P)H-quinone oxidoreductase subunit N (158 aa).

The protein belongs to the complex I NdhN subunit family. NDH-1 can be composed of about 15 different subunits; different subcomplexes with different compositions have been identified which probably have different functions.

Its subcellular location is the cellular thylakoid membrane. The catalysed reaction is a plastoquinone + NADH + (n+1) H(+)(in) = a plastoquinol + NAD(+) + n H(+)(out). The enzyme catalyses a plastoquinone + NADPH + (n+1) H(+)(in) = a plastoquinol + NADP(+) + n H(+)(out). Functionally, NDH-1 shuttles electrons from an unknown electron donor, via FMN and iron-sulfur (Fe-S) centers, to quinones in the respiratory and/or the photosynthetic chain. The immediate electron acceptor for the enzyme in this species is believed to be plastoquinone. Couples the redox reaction to proton translocation, and thus conserves the redox energy in a proton gradient. Cyanobacterial NDH-1 also plays a role in inorganic carbon-concentration. The polypeptide is NAD(P)H-quinone oxidoreductase subunit N (Nostoc punctiforme (strain ATCC 29133 / PCC 73102)).